The primary structure comprises 547 residues: RNA polymerase sigma factor sigF, chloroplastic (547 aa).

Residues 1–17 (MEATRNLVSSSPSFQTK) are compositionally biased toward polar residues. Disordered stretches follow at residues 1-28 (MEAT…SSPS) and 54-79 (FPAS…DDRT). A chloroplast-targeting transit peptide spans 1 to 55 (MEATRNLVSSSPSFQTKTHLKSSYSSPSSVVMLHDQTTTPVVNSRHLNSLSRHFP). Positions 62–79 (EPREESRPLSHALRDDRT) are enriched in basic and acidic residues. Ser94, Ser95, Ser174, Ser176, Ser177, and Ser180 each carry phosphoserine; by CK2. Residues 163-226 (ANPSDNIKDS…QKTSAKKKYK (64 aa)) form a disordered region. Over residues 172-181 (SLSTSSSMSL) the composition is skewed to low complexity. Thr249 carries the phosphothreonine; by CK2 modification. The Polymerase core binding motif lies at 335 to 348 (DLLQEGSMGLMKSV). Residues 505–524 (LSEIGEIYGLSKERVRQLES) constitute a DNA-binding region (H-T-H motif).

Belongs to the sigma-70 factor family. As to quaternary structure, interacts (via N-terminus) with DG1 (via C-terminus). Post-translationally, phosphorylated to acquire sigma activity; site-specific phosphorylation regulates promoter affinity. Phosphorylation at Ser-174 by chloroplastic CK2 requires prior phosphorylation at Ser-177. Phosphorylation at either Ser-94, Ser-95 or Ser-174 is required for sigma activation. As to expression, expressed in seedling, accumulating progressively. Present in leaves but not in roots.

It is found in the plastid. The protein resides in the chloroplast. In terms of biological role, sigma factors are initiation factors that promote the attachment of plastid-encoded RNA polymerase (PEP) to specific initiation sites and are then released. Regulates transcription in chloroplast in a DG1-dependent manner. Involved in light-dependent chloroplast development. Required during early plant development and primary leaf formation. In Arabidopsis thaliana (Mouse-ear cress), this protein is RNA polymerase sigma factor sigF, chloroplastic (SIGF).